Here is a 569-residue protein sequence, read N- to C-terminus: Dihydroxy-acid dehydratase (569 aa).

Residue Asp80 participates in Mg(2+) binding. Cys121 serves as a coordination point for [2Fe-2S] cluster. 2 residues coordinate Mg(2+): Asp122 and Lys123. At Lys123 the chain carries N6-carboxylysine. Residue Cys194 coordinates [2Fe-2S] cluster. Glu446 provides a ligand contact to Mg(2+). Residue Ser472 is the Proton acceptor of the active site.

It belongs to the IlvD/Edd family. In terms of assembly, homodimer. [2Fe-2S] cluster serves as cofactor. Requires Mg(2+) as cofactor.

The catalysed reaction is (2R)-2,3-dihydroxy-3-methylbutanoate = 3-methyl-2-oxobutanoate + H2O. It catalyses the reaction (2R,3R)-2,3-dihydroxy-3-methylpentanoate = (S)-3-methyl-2-oxopentanoate + H2O. It functions in the pathway amino-acid biosynthesis; L-isoleucine biosynthesis; L-isoleucine from 2-oxobutanoate: step 3/4. It participates in amino-acid biosynthesis; L-valine biosynthesis; L-valine from pyruvate: step 3/4. Its function is as follows. Functions in the biosynthesis of branched-chain amino acids. Catalyzes the dehydration of (2R,3R)-2,3-dihydroxy-3-methylpentanoate (2,3-dihydroxy-3-methylvalerate) into 2-oxo-3-methylpentanoate (2-oxo-3-methylvalerate) and of (2R)-2,3-dihydroxy-3-methylbutanoate (2,3-dihydroxyisovalerate) into 2-oxo-3-methylbutanoate (2-oxoisovalerate), the penultimate precursor to L-isoleucine and L-valine, respectively. The polypeptide is Dihydroxy-acid dehydratase (Desulforudis audaxviator (strain MP104C)).